Consider the following 160-residue polypeptide: Small ribosomal subunit protein uS19 (160 aa).

The disordered stretch occupies residues methionine 1–arginine 27.

This sequence belongs to the universal ribosomal protein uS19 family.

Functionally, protein S19 forms a complex with S13 that binds strongly to the 16S ribosomal RNA. This is Small ribosomal subunit protein uS19 from Methanococcus vannielii (strain ATCC 35089 / DSM 1224 / JCM 13029 / OCM 148 / SB).